The following is a 311-amino-acid chain: Progestin and adipoQ receptor family member 3 (311 aa).

The tract at residues 1–20 is required for interaction with SREBF2; sequence MHQKLLKSAHYIELGSYQYW. Over 1 to 73 the chain is Cytoplasmic; the sequence is MHQKLLKSAH…FILSNETVNI (73 aa). The required for interaction with SCAP stretch occupies residues 41 to 60; it reads KDNPYITDGYRAYLPSRLCI. Residues 61-71 are golgi targeting; the sequence is KSLFILSNETV. The chain crosses the membrane as a helical span at residues 74–96; sequence WSHLLGFFLFFTLGIYDMTSVLP. The Lumenal segment spans residues 97 to 105; sequence SASASREDF. Residues 106 to 128 traverse the membrane as a helical segment; it reads VICSICLFCFQVCMLCSVGYHLF. Residues 129–140 lie on the Cytoplasmic side of the membrane; it reads SCHRSEKTCRRW. The helical transmembrane segment at 141-163 threads the bilayer; sequence MALDYAGISIGILGCYVSGVFYA. Over 164–172 the chain is Lumenal; the sequence is FYCNNYWRQ. A helical membrane pass occupies residues 173–195; it reads VYLITVLAMILAVFFAQIHPNYL. At 196–201 the chain is on the cytoplasmic side; the sequence is TQQWQR. Residues 202–224 traverse the membrane as a helical segment; that stretch reads LRSIIFCSVSGYGVIPTLHWVWL. Topologically, residues 225-238 are lumenal; it reads NGGIGAPIVQDFAP. The helical transmembrane segment at 239-256 threads the bilayer; that stretch reads RVIVMYMIALLAFLFYIS. Over 257-275 the chain is Cytoplasmic; it reads KVPERYFPGQLNYLGSSHQ. Residues 276 to 298 traverse the membrane as a helical segment; sequence IWHILAVVMLYWWHQSTVYVMQY. A golgi targeting region spans residues 299–303; the sequence is RHSKP. Over 299–311 the chain is Lumenal; sequence RHSKPCPDYVSHL.

It belongs to the ADIPOR family. In terms of assembly, interacts with SCAP and SREBF2; the interactions are direct, increase in low cholesterol conditions and tether SCAP:SREBP complex to the Golgi apparatus. Interaction with SCAP is mutually exclusive with INSIG1. In hepatocytes, interacts with PPARA and HUWE1; the interactions promote PPARA poylubiquitination and HUWE1-mediated degradation. In macrophages, interacts with PPARG and STUB1; the interactions promote PPARG poylubiquitination and STUB1-mediated degradation. In terms of tissue distribution, widely expressed in a range of tissues.

Its subcellular location is the golgi apparatus membrane. In terms of biological role, golgi-scaffold protein which modulates its interactors acitivies by anchoring them to the Golgi apparatus. Functions as a spatial regulator of RAF1 kinase by sequestrating it to the Golgi apparatus. Acts as a positive regulator of cholesterol biosynthesis by mediating the anchoring of the SCAP:SREBP complex in the Golgi apparatus, thereby promoting SCAP:SREBF2 complex formation, potentiating SREBF2 and SREBF1 processing and enhancing lipid synthesis. Also regulates PPARA and PPARG functions by mediating their interaction with E3 ubiquitin ligases, such as STUB1 or HUWE1, leading to their polyubiquitination and proteasome-mediated degradation. The polypeptide is Progestin and adipoQ receptor family member 3 (Homo sapiens (Human)).